We begin with the raw amino-acid sequence, 417 residues long: Serine hydroxymethyltransferase (417 aa).

Residues leucine 120 and 124 to 126 each bind (6S)-5,6,7,8-tetrahydrofolate; that span reads GHL. Position 229 is an N6-(pyridoxal phosphate)lysine (lysine 229).

The protein belongs to the SHMT family. In terms of assembly, homodimer. The cofactor is pyridoxal 5'-phosphate.

It is found in the cytoplasm. The catalysed reaction is (6R)-5,10-methylene-5,6,7,8-tetrahydrofolate + glycine + H2O = (6S)-5,6,7,8-tetrahydrofolate + L-serine. It functions in the pathway one-carbon metabolism; tetrahydrofolate interconversion. The protein operates within amino-acid biosynthesis; glycine biosynthesis; glycine from L-serine: step 1/1. Catalyzes the reversible interconversion of serine and glycine with tetrahydrofolate (THF) serving as the one-carbon carrier. This reaction serves as the major source of one-carbon groups required for the biosynthesis of purines, thymidylate, methionine, and other important biomolecules. Also exhibits THF-independent aldolase activity toward beta-hydroxyamino acids, producing glycine and aldehydes, via a retro-aldol mechanism. This Anaeromyxobacter sp. (strain K) protein is Serine hydroxymethyltransferase.